The primary structure comprises 359 residues: Phospho-N-acetylmuramoyl-pentapeptide-transferase (359 aa).

Transmembrane regions (helical) follow at residues 3-23 (QILI…PALI), 55-75 (VAII…GLAF), 80-100 (ISAS…VGFL), 117-137 (TAKT…ALGF), 156-176 (IATV…VVSA), 187-207 (LDGL…LITF), 231-251 (LAIV…WNAA), 255-275 (IFMG…ISVT), 280-300 (ILAV…VLQI), and 334-354 (FWLL…GEWL).

The protein belongs to the glycosyltransferase 4 family. MraY subfamily. Mg(2+) is required as a cofactor.

Its subcellular location is the cell membrane. The catalysed reaction is UDP-N-acetyl-alpha-D-muramoyl-L-alanyl-gamma-D-glutamyl-meso-2,6-diaminopimeloyl-D-alanyl-D-alanine + di-trans,octa-cis-undecaprenyl phosphate = di-trans,octa-cis-undecaprenyl diphospho-N-acetyl-alpha-D-muramoyl-L-alanyl-D-glutamyl-meso-2,6-diaminopimeloyl-D-alanyl-D-alanine + UMP. The protein operates within cell wall biogenesis; peptidoglycan biosynthesis. In terms of biological role, catalyzes the initial step of the lipid cycle reactions in the biosynthesis of the cell wall peptidoglycan: transfers peptidoglycan precursor phospho-MurNAc-pentapeptide from UDP-MurNAc-pentapeptide onto the lipid carrier undecaprenyl phosphate, yielding undecaprenyl-pyrophosphoryl-MurNAc-pentapeptide, known as lipid I. This Mycolicibacterium paratuberculosis (strain ATCC BAA-968 / K-10) (Mycobacterium paratuberculosis) protein is Phospho-N-acetylmuramoyl-pentapeptide-transferase.